The chain runs to 378 residues: Protein FAM170B (378 aa).

3 disordered regions span residues 1-56, 244-265, and 277-378; these read MKHH…LPDD, TRDQ…DSSE, and QQQP…QQGK. Composition is skewed to low complexity over residues 277–339 and 349–378; these read QQQP…QPLQ and PQKQ…QQGK.

This sequence belongs to the FAM170 family. Interacts with GOPC. Exclusively expressed in adult testis (at protein level). Expression first started at postnatal week 3 in round spermatids, elongated spermatids and mature sperm.

The protein localises to the cytoplasmic vesicle. It is found in the secretory vesicle. It localises to the acrosome. Its subcellular location is the acrosome outer membrane. Plays a role in fertilization through the acrosome reaction. The chain is Protein FAM170B from Mus musculus (Mouse).